The following is a 222-amino-acid chain: Ribosome maturation factor RimM (222 aa).

The tract at residues 1–22 (MTERKQGAARPLNRPLVQPQGE) is disordered. The PRC barrel domain occupies 145 to 222 (EDEFYWVDLI…RIVVDWGLDY (78 aa)).

It belongs to the RimM family. In terms of assembly, binds ribosomal protein uS19.

It is found in the cytoplasm. An accessory protein needed during the final step in the assembly of 30S ribosomal subunit, possibly for assembly of the head region. Essential for efficient processing of 16S rRNA. May be needed both before and after RbfA during the maturation of 16S rRNA. It has affinity for free ribosomal 30S subunits but not for 70S ribosomes. This Cupriavidus necator (strain ATCC 17699 / DSM 428 / KCTC 22496 / NCIMB 10442 / H16 / Stanier 337) (Ralstonia eutropha) protein is Ribosome maturation factor RimM.